The chain runs to 320 residues: Cytochrome f (320 aa).

The N-terminal stretch at 1 to 35 is a signal peptide; that stretch reads MENKNTFSWVKEQMTRSISVSIMIYVITQTSISNA. Heme contacts are provided by Y36, C56, C59, and H60. The chain crosses the membrane as a helical span at residues 286 to 306; that stretch reads VQGLLFFFASVILAQVFLVLK.

Belongs to the cytochrome f family. In terms of assembly, the 4 large subunits of the cytochrome b6-f complex are cytochrome b6, subunit IV (17 kDa polypeptide, petD), cytochrome f and the Rieske protein, while the 4 small subunits are PetG, PetL, PetM and PetN. The complex functions as a dimer. Heme is required as a cofactor.

It localises to the plastid. The protein localises to the chloroplast thylakoid membrane. Component of the cytochrome b6-f complex, which mediates electron transfer between photosystem II (PSII) and photosystem I (PSI), cyclic electron flow around PSI, and state transitions. The chain is Cytochrome f from Lolium perenne (Perennial ryegrass).